The primary structure comprises 436 residues: 3-ketoacyl-CoA thiolase (436 aa).

Cysteine 99 functions as the Acyl-thioester intermediate in the catalytic mechanism. Residues histidine 392 and cysteine 422 each act as proton acceptor in the active site.

Belongs to the thiolase-like superfamily. Thiolase family. Heterotetramer of two alpha chains (FadJ) and two beta chains (FadI).

It is found in the cytoplasm. It catalyses the reaction an acyl-CoA + acetyl-CoA = a 3-oxoacyl-CoA + CoA. It functions in the pathway lipid metabolism; fatty acid beta-oxidation. Catalyzes the final step of fatty acid oxidation in which acetyl-CoA is released and the CoA ester of a fatty acid two carbons shorter is formed. The sequence is that of 3-ketoacyl-CoA thiolase from Escherichia coli O8 (strain IAI1).